Consider the following 122-residue polypeptide: Large ribosomal subunit protein uL14 (122 aa).

Belongs to the universal ribosomal protein uL14 family. In terms of assembly, part of the 50S ribosomal subunit. Forms a cluster with proteins L3 and L19. In the 70S ribosome, L14 and L19 interact and together make contacts with the 16S rRNA in bridges B5 and B8.

Its function is as follows. Binds to 23S rRNA. Forms part of two intersubunit bridges in the 70S ribosome. The protein is Large ribosomal subunit protein uL14 of Burkholderia multivorans (strain ATCC 17616 / 249).